Here is a 66-residue protein sequence, read N- to C-terminus: Large ribosomal subunit protein uL29 (66 aa).

This sequence belongs to the universal ribosomal protein uL29 family.

In Borrelia recurrentis (strain A1), this protein is Large ribosomal subunit protein uL29.